Consider the following 251-residue polypeptide: tRNA-uridine aminocarboxypropyltransferase 2 (251 aa).

4 residues coordinate Zn(2+): Cys23, Cys26, Cys33, and Cys35. The DXTW motif lies at 131-134 (DGTW).

Belongs to the TDD superfamily. DTWD2 family.

The enzyme catalyses a uridine in tRNA + S-adenosyl-L-methionine = a 3-[(3S)-3-amino-3-carboxypropyl]uridine in tRNA + S-methyl-5'-thioadenosine + H(+). In terms of biological role, catalyzes the formation of 3-(3-amino-3-carboxypropyl)uridine (acp3U) at position 20a in the D-loop of several cytoplasmic tRNAs (acp3U(20a)). The polypeptide is tRNA-uridine aminocarboxypropyltransferase 2 (Drosophila melanogaster (Fruit fly)).